A 350-amino-acid polypeptide reads, in one-letter code: Protein-glutamate methylesterase/protein-glutamine glutaminase (350 aa).

The Response regulatory domain maps to 5-122 (RVLCVDDSAL…REGMLAYSEL (118 aa)). The residue at position 56 (Asp56) is a 4-aspartylphosphate. Positions 153 to 345 (LLSSEKLIAI…QRMLAQISAG (193 aa)) constitute a CheB-type methylesterase domain. Active-site residues include Ser165, His191, and Asp287.

The protein belongs to the CheB family. In terms of processing, phosphorylated by CheA. Phosphorylation of the N-terminal regulatory domain activates the methylesterase activity.

Its subcellular location is the cytoplasm. The catalysed reaction is [protein]-L-glutamate 5-O-methyl ester + H2O = L-glutamyl-[protein] + methanol + H(+). The enzyme catalyses L-glutaminyl-[protein] + H2O = L-glutamyl-[protein] + NH4(+). In terms of biological role, involved in chemotaxis. Part of a chemotaxis signal transduction system that modulates chemotaxis in response to various stimuli. Catalyzes the demethylation of specific methylglutamate residues introduced into the chemoreceptors (methyl-accepting chemotaxis proteins or MCP) by CheR. Also mediates the irreversible deamidation of specific glutamine residues to glutamic acid. Does not interact with the C-terminal pentapeptide of the chemoreceptors. This is Protein-glutamate methylesterase/protein-glutamine glutaminase from Pectobacterium atrosepticum (strain SCRI 1043 / ATCC BAA-672) (Erwinia carotovora subsp. atroseptica).